A 177-amino-acid chain; its full sequence is DELTA-stichotoxin-Hcr4b (177 aa).

Positions 3–12 (ALAGTITLGA) are plays an important role in the hemolytic activity. An N-terminal region region spans residues 11-30 (GASLGFQILDKVLGELGKVS). Residues Ser-54, Val-87, Ser-105, Pro-107, Tyr-133, Tyr-137, and Tyr-138 each coordinate phosphocholine. The interval 105-120 (SVPFDYNLYSNWWDVK) is trp-rich region, which is important for the binding to lipid membrane.

The protein belongs to the actinoporin family. Sea anemone subfamily. As to quaternary structure, octamer or nonamer in membranes. Monomer in the soluble state.

Its subcellular location is the secreted. The protein resides in the nematocyst. It localises to the target cell membrane. Functionally, pore-forming protein that forms cations-selective hydrophilic pores of around 1 nm and causes cardiac stimulation and cytolysis. Pore formation is a multi-step process that involves specific recognition of membrane sphingomyelin (but neither cholesterol nor phosphatidylcholine) using aromatic rich region and adjacent phosphocholine (POC) binding site, firm binding to the membrane (mainly driven by hydrophobic interactions) accompanied by the transfer of the N-terminal region to the lipid-water interface and finally pore formation after oligomerization of monomers. Cytolytic effects include red blood cells hemolysis, platelet aggregation and lysis, cytotoxic and cytostatic effects on fibroblasts. Lethality in mammals has been ascribed to severe vasospasm of coronary vessels, cardiac arrhythmia, and inotropic effects. Preincubation with exogenous sphingomyeline causes complete loss of hemolytic activity. This is DELTA-stichotoxin-Hcr4b from Radianthus crispa (Leathery sea anemone).